We begin with the raw amino-acid sequence, 2134 residues long: Genome polyprotein (2134 aa).

The Cytoplasmic portion of the chain corresponds to 1-1377 (MSKLFSTVGK…WLFEKIKTSK (1377 aa)). Residues 781–882 (IVSCSGEKAK…GDYGTKEGEK (102 aa)) form the LRAT domain. Catalysis depends on residues His-791 and His-802. The Acyl-thioester intermediate role is filled by Cys-863. The 163-residue stretch at 1127–1289 (LNKLGRLDKP…EEFSTHAMLD (163 aa)) folds into the SF3 helicase domain. ATP is bound at residue 1153 to 1160 (GNRGGGKS). Residues 1378 to 1392 (WYILGCVGAVLSVSV) lie within the membrane without spanning it. The Cytoplasmic segment spans residues 1393 to 2134 (LGVFAYHMIK…VKYRFIDDSF (742 aa)). Residue Tyr-1415 is modified to O-(5'-phospho-RNA)-tyrosine. Positions 1431–1643 (DAQSVVDISN…ITKEMIEEML (213 aa)) constitute a Peptidase C3 domain. Catalysis depends on for protease 3C activity residues His-1477, Asp-1515, and Cys-1603. In terms of domain architecture, RdRp catalytic spans 1880–2001 (DLVVGLDFSN…CIKKEYLDQK (122 aa)).

The protein belongs to the picornaviridae polyprotein family. In terms of processing, specific enzymatic cleavages by the viral protease in vivo yield a variety of precursors and mature proteins. During virion maturation, non-infectious particles are rendered infectious following cleavage of VP0. This maturation cleavage is followed by a conformational change of the particle. Post-translationally, VPg is uridylylated by the polymerase and is covalently linked to the 5'-end of genomic RNA. This uridylylated form acts as a nucleotide-peptide primer for the polymerase.

It localises to the virion. Its subcellular location is the host cytoplasm. The protein resides in the host cytoplasmic vesicle membrane. It carries out the reaction RNA(n) + a ribonucleoside 5'-triphosphate = RNA(n+1) + diphosphate. It catalyses the reaction a ribonucleoside 5'-triphosphate + H2O = a ribonucleoside 5'-diphosphate + phosphate + H(+). The catalysed reaction is Selective cleavage of Gln-|-Gly bond in the poliovirus polyprotein. In other picornavirus reactions Glu may be substituted for Gln, and Ser or Thr for Gly.. Capsid proteins VP1, VP2, and VP3 form a closed capsid enclosing the viral positive strand RNA genome. All these proteins contain a beta-sheet structure called beta-barrel jelly roll. Together they form an icosahedral capsid (T=3) composed of 60 copies of each VP1, VP2, and VP3, with a diameter of approximately 300 Angstroms. VP1 is situated at the 12 fivefold axes, whereas VP2 and VP3 are located at the quasi-sixfold axes. Its function is as follows. VP0 precursor is a component of immature procapsids. The N-terminal domain of VP0, protein VP4, is needed for the assembly of 12 pentamers into the icosahedral structure. Unlike other picornaviruses, AEV VP4 may not be myristoylated. In terms of biological role, protein 2B and 2BC precursor affect membrane integrity and cause an increase in membrane permeability. Functionally, associates with and induces structural rearrangements of intracellular membranes. It displays RNA-binding, nucleotide binding and NTPase activities. Protein 3A, via its hydrophobic domain, serves as membrane anchor. Its function is as follows. Protein 3B is covalently linked to the 5'-end of both the positive-strand and negative-strand genomic RNAs. It acts as a genome-linked replication primer. In terms of biological role, cysteine protease that generates mature viral proteins from the precursor polyprotein. In addition to its proteolytic activity, it binds to viral RNA, and thus influences viral genome replication. RNA and substrate bind cooperatively to the protease. Functionally, RNA-directed RNA polymerase 3D-POL replicates genomic and antigenomic RNA by recognizing replications specific signals. This is Genome polyprotein from Avian encephalomyelitis virus (strain Calnek vaccine) (AEV).